The following is a 201-amino-acid chain: Probable GTP-binding protein EngB (201 aa).

Residues 23–196 (TGPEIALAGR…HEAVEEILSM (174 aa)) form the EngB-type G domain. GTP contacts are provided by residues 31 to 38 (GRSNVGKS), 58 to 62 (GKTQM), 76 to 79 (DLPG), 143 to 146 (TKAD), and 175 to 177 (YSA). 2 residues coordinate Mg(2+): Ser-38 and Thr-60.

It belongs to the TRAFAC class TrmE-Era-EngA-EngB-Septin-like GTPase superfamily. EngB GTPase family. It depends on Mg(2+) as a cofactor.

Functionally, necessary for normal cell division and for the maintenance of normal septation. The protein is Probable GTP-binding protein EngB of Desulfitobacterium hafniense (strain DSM 10664 / DCB-2).